An 863-amino-acid polypeptide reads, in one-letter code: Dipeptidyl peptidase 9 (863 aa).

Residues Met-1 to Pro-20 are disordered. Ala-2 is modified (N-acetylalanine). Active-site charge relay system residues include Ser-730, Asp-808, and His-840. Residue Ser-730 coordinates Val-boroPro.

The protein belongs to the peptidase S9B family. DPPIV subfamily. As to quaternary structure, homodimer. Forms a ternary complex with NLRP1, composed of a DPP9 homodimer, one full-length NLRP1 protein, and one cleaved C-terminus of NLRP1 (NACHT, LRR and PYD domains-containing protein 1, C-terminus). Forms a ternary complex with CARD8, composed of a DPP9 homodimer, one full-length NLRP1 protein, and one cleaved C-terminus of CARD8 (Caspase recruitment domain-containing protein 8, C-terminus). In the ternary complex, only one subunit of the DPP9 homodimer is bound to NLRP1 or CARD8. In terms of tissue distribution, ubiquitously expressed, with highest levels in liver, heart and muscle, and lowest levels in brain.

It is found in the cytoplasm. It localises to the cytosol. Its subcellular location is the nucleus. It carries out the reaction Release of an N-terminal dipeptide, Xaa-Yaa-|-Zaa-, from a polypeptide, preferentially when Yaa is Pro, provided Zaa is neither Pro nor hydroxyproline.. With respect to regulation, inhibited by the serine proteinase inhibitor 4-(2-aminoethyl)benzenesulphonyl fluoride (AEBSF), and by di-isopropylfluorophosphate. Inhibited by Val-boroPro (Talabostat, PT-100), a non-selective inhibitor, which triggers pyroptosis in monocytes and macrophages. Val-boroPro inhibits activity by binding to the active site, mimicking a substrate-bound state, thereby displacing the C-terminal fragment of NLRP1, leading to activation of the NLRP1 inflammasome. In contrast, Val-boroPro does not directly displaces CARD8: it acts by promoting degradation of the N-terminal part of CARD8, leading to indirect disruption of the ternary complex. Chemical inhibition of DPP9 by Val-boroPro in HIV-1-infected cells activates the CARD8 inflammasome, triggering cell death, offering a promising strategy for the elimination of HIV-1 reservoirs in people living with HIV-1. Its function is as follows. Dipeptidyl peptidase that cleaves off N-terminal dipeptides from proteins having a Pro or Ala residue at position 2. Acts as a key inhibitor of caspase-1-dependent monocyte and macrophage pyroptosis in resting cells by preventing activation of NLRP1 and CARD8. Sequesters the cleaved C-terminal part of NLRP1 and CARD8, which respectively constitute the active part of the NLRP1 and CARD8 inflammasomes, in a ternary complex, thereby preventing their oligomerization and activation. The dipeptidyl peptidase activity is required to suppress NLRP1 and CARD8; however, neither NLRP1 nor CARD8 are bona fide substrates of DPP9, suggesting the existence of substrate(s) required for NLRP1 and CARD8 inhibition. This is Dipeptidyl peptidase 9 from Homo sapiens (Human).